We begin with the raw amino-acid sequence, 314 residues long: Phosphoribosylaminoimidazole-succinocarboxamide synthase (314 aa).

This sequence belongs to the SAICAR synthetase family.

The catalysed reaction is 5-amino-1-(5-phospho-D-ribosyl)imidazole-4-carboxylate + L-aspartate + ATP = (2S)-2-[5-amino-1-(5-phospho-beta-D-ribosyl)imidazole-4-carboxamido]succinate + ADP + phosphate + 2 H(+). The protein operates within purine metabolism; IMP biosynthesis via de novo pathway; 5-amino-1-(5-phospho-D-ribosyl)imidazole-4-carboxamide from 5-amino-1-(5-phospho-D-ribosyl)imidazole-4-carboxylate: step 1/2. The protein is Phosphoribosylaminoimidazole-succinocarboxamide synthase of Bacteroides thetaiotaomicron (strain ATCC 29148 / DSM 2079 / JCM 5827 / CCUG 10774 / NCTC 10582 / VPI-5482 / E50).